We begin with the raw amino-acid sequence, 73 residues long: Translation initiation factor IF-1 (73 aa).

In terms of domain architecture, S1-like spans 1-73 (MAKKDGVIEI…TRGRIVYRYK (73 aa)).

This sequence belongs to the IF-1 family. In terms of assembly, component of the 30S ribosomal translation pre-initiation complex which assembles on the 30S ribosome in the order IF-2 and IF-3, IF-1 and N-formylmethionyl-tRNA(fMet); mRNA recruitment can occur at any time during PIC assembly.

The protein localises to the cytoplasm. One of the essential components for the initiation of protein synthesis. Stabilizes the binding of IF-2 and IF-3 on the 30S subunit to which N-formylmethionyl-tRNA(fMet) subsequently binds. Helps modulate mRNA selection, yielding the 30S pre-initiation complex (PIC). Upon addition of the 50S ribosomal subunit IF-1, IF-2 and IF-3 are released leaving the mature 70S translation initiation complex. The chain is Translation initiation factor IF-1 from Paenarthrobacter aurescens (strain TC1).